The chain runs to 278 residues: NADPH-dependent 7-cyano-7-deazaguanine reductase (278 aa).

Residue 87 to 89 (IES) participates in substrate binding. NADPH is bound at residue 89-90 (SK). Cysteine 185 acts as the Thioimide intermediate in catalysis. Catalysis depends on aspartate 192, which acts as the Proton donor. 224–225 (HE) provides a ligand contact to substrate. 253-254 (RG) serves as a coordination point for NADPH. The segment at 255–278 (GLDINPYRSTNPTFSVQNHRSFRQ) is disordered. Residues 261 to 278 (YRSTNPTFSVQNHRSFRQ) are compositionally biased toward polar residues.

This sequence belongs to the GTP cyclohydrolase I family. QueF type 2 subfamily. As to quaternary structure, homodimer.

It is found in the cytoplasm. The enzyme catalyses 7-aminomethyl-7-carbaguanine + 2 NADP(+) = 7-cyano-7-deazaguanine + 2 NADPH + 3 H(+). The protein operates within tRNA modification; tRNA-queuosine biosynthesis. In terms of biological role, catalyzes the NADPH-dependent reduction of 7-cyano-7-deazaguanine (preQ0) to 7-aminomethyl-7-deazaguanine (preQ1). In Coxiella burnetii (strain CbuK_Q154) (Coxiella burnetii (strain Q154)), this protein is NADPH-dependent 7-cyano-7-deazaguanine reductase.